The chain runs to 257 residues: AN1-type zinc finger protein 2B (257 aa).

2 consecutive AN1-type zinc fingers follow at residues 4 to 52 and 94 to 142; these read PDLG…QKDI and KIFT…HPTS. Zn(2+) contacts are provided by C10, C15, C25, C28, C33, H36, H42, C44, C100, C105, C115, C118, C123, H126, H132, and C134. A VCP/p97-interacting motif (VIM) region spans residues 141–151; that stretch reads TSRAGLAAISR. A disordered region spans residues 153–187; the sequence is QAVASTSTVPSPSQTMPSCTSPSRATTRSPSWTAP. A compositionally biased stretch (polar residues) spans 155 to 171; the sequence is VASTSTVPSPSQTMPSC. Phosphoserine is present on residues S163 and S173. The segment covering 172–186 has biased composition (low complexity); the sequence is TSPSRATTRSPSWTA. 2 UIM domains span residues 197–216 and 221–240; these read SEDE…TKPQ and QEEE…AEYQ. C254 carries the post-translational modification Cysteine methyl ester. C254 is lipidated: S-geranylgeranyl cysteine. Positions 254 to 257 match the CAAX motif motif; sequence CSLC. The propeptide at 255 to 257 is removed in mature form; that stretch reads SLC.

Binds 'Lys-48'-linked polyubiquitin chains of ubiquitinated proteins. Associates with the proteasome complex; upon exposure to arsenite. Interacts (via VIM motif) with VCP; the interaction is direct. Interacts with BAG6. Interacts with IGF1R (nascent precursor form). Interacts with DERL1, FAF2, NPLOC4 and UFD1; probably through VCP. In terms of processing, phosphorylated by MAPK14. Phosphorylation has no effect on association with the proteasome complex.

Its subcellular location is the endoplasmic reticulum membrane. In terms of biological role, plays a role in protein homeostasis by regulating both the translocation and the ubiquitin-mediated proteasomal degradation of nascent proteins at the endoplasmic reticulum. It is involved in the regulation of signal-mediated translocation of proteins into the endoplasmic reticulum. It also plays a role in the ubiquitin-mediated proteasomal degradation of proteins for which signal-mediated translocation to the endoplasmic reticulum has failed. May therefore function in the endoplasmic reticulum stress-induced pre-emptive quality control, a mechanism that selectively attenuates the translocation of newly synthesized proteins into the endoplasmic reticulum and reroutes them to the cytosol for proteasomal degradation. By controlling the steady-state expression of the IGF1R receptor, indirectly regulates the insulin-like growth factor receptor signaling pathway. In Homo sapiens (Human), this protein is AN1-type zinc finger protein 2B.